Reading from the N-terminus, the 264-residue chain is ATP synthase subunit a (264 aa).

Transmembrane regions (helical) follow at residues 41 to 61 (ITNI…INLL), 99 to 119 (IYFP…LIGM), 129 to 149 (HFVL…ILGF), 156 to 176 (FFSL…LVLI), 194 to 214 (ANIL…YNIM), 217 to 237 (GIIF…FSGL), and 238 to 258 (ELGI…GYIK).

The protein belongs to the ATPase A chain family. In terms of assembly, F-type ATPases have 2 components, CF(1) - the catalytic core - and CF(0) - the membrane proton channel. CF(1) has five subunits: alpha(3), beta(3), gamma(1), delta(1), epsilon(1). CF(0) has three main subunits: a, b and c.

The protein resides in the mitochondrion inner membrane. Functionally, mitochondrial membrane ATP synthase (F(1)F(0) ATP synthase or Complex V) produces ATP from ADP in the presence of a proton gradient across the membrane which is generated by electron transport complexes of the respiratory chain. F-type ATPases consist of two structural domains, F(1) - containing the extramembraneous catalytic core and F(0) - containing the membrane proton channel, linked together by a central stalk and a peripheral stalk. During catalysis, ATP synthesis in the catalytic domain of F(1) is coupled via a rotary mechanism of the central stalk subunits to proton translocation. Key component of the proton channel; it may play a direct role in the translocation of protons across the membrane. The chain is ATP synthase subunit a (ATP6) from Podospora anserina (strain S / ATCC MYA-4624 / DSM 980 / FGSC 10383) (Pleurage anserina).